Reading from the N-terminus, the 199-residue chain is NAD(P)H dehydrogenase (quinone) (199 aa).

One can recognise a Flavodoxin-like domain in the interval 4–190 (VLVLYYSAYG…AGARYQGKTI (187 aa)). Residues 10 to 15 (SAYGHI) and 78 to 80 (TRF) each bind FMN. An NAD(+)-binding site is contributed by Tyr-12. Residue Trp-98 participates in substrate binding. FMN-binding positions include 113–119 (STATQHG) and His-134.

It belongs to the WrbA family. FMN is required as a cofactor.

It catalyses the reaction a quinone + NADH + H(+) = a quinol + NAD(+). It carries out the reaction a quinone + NADPH + H(+) = a quinol + NADP(+). This Rhodopseudomonas palustris (strain TIE-1) protein is NAD(P)H dehydrogenase (quinone).